A 236-amino-acid polypeptide reads, in one-letter code: Concanavalin-Ma (236 aa).

2 residues coordinate Mn(2+): Glu-8 and Asp-10. The Ca(2+) site is built by Asp-10, Tyr-12, Asn-14, and Asp-19. Tyr-12 contributes to the a carbohydrate binding site. 2 residues coordinate Mn(2+): Asp-19 and His-24. Residue 98–99 coordinates a carbohydrate; the sequence is LY. Asp-207 serves as a coordination point for Ca(2+). Arg-227 serves as a coordination point for a carbohydrate.

The protein belongs to the leguminous lectin family. As to quaternary structure, homotetramer.

Glucose/D-mannose specific lectin. This chain is Concanavalin-Ma, found in Canavalia rosea (Beach bean).